Consider the following 160-residue polypeptide: C-type lectin mosGCTL-1 (160 aa).

The N-terminal stretch at 1-20 (MLTKGITLILLLVLVHSSHG) is a signal peptide. Positions 23 to 140 (TPNRKFYIPS…YHWSWNDNTC (118 aa)) constitute a C-type lectin domain. 2 disulfide bridges follow: Cys-44-Cys-140 and Cys-120-Cys-140. Asn-76 carries N-linked (GlcNAc...) asparagine glycosylation.

Interacts with putative receptor-type tyrosine-protein phosphatase mosPTP-1; the interaction probably mediates the recruitment of West Nile virus particles in complex with C-type lectin mosGCTL-1 to the cell surface. In terms of assembly, (Microbial infection) Interacts with envelope protein E and virions of West Nile virus in a calcium-dependent manner. In terms of tissue distribution, female salivary gland (at protein level).

The protein resides in the secreted. Its function is as follows. Putative lectin. Functionally, (Microbial infection) Facilitates West Nile virus infection in mosquitoes probably via capturing viral particles and presenting them to a ligand on the cell surface, thereby facilitating viral entry. This Aedes aegypti (Yellowfever mosquito) protein is C-type lectin mosGCTL-1.